Here is a 210-residue protein sequence, read N- to C-terminus: Thymidylate kinase (210 aa).

10-17 (GLEGAGKT) lines the ATP pocket.

This sequence belongs to the thymidylate kinase family.

The enzyme catalyses dTMP + ATP = dTDP + ADP. Phosphorylation of dTMP to form dTDP in both de novo and salvage pathways of dTTP synthesis. The protein is Thymidylate kinase of Actinobacillus succinogenes (strain ATCC 55618 / DSM 22257 / CCUG 43843 / 130Z).